The following is a 32-amino-acid chain: Cytochrome b6-f complex subunit 7 (32 aa).

The helical transmembrane segment at 5–25 threads the bilayer; it reads IFGTAAIFWVLIPIGLVGGAL.

This sequence belongs to the PetM family. As to quaternary structure, the 4 large subunits of the cytochrome b6-f complex are cytochrome b6, subunit IV (17 kDa polypeptide, PetD), cytochrome f and the Rieske protein, while the 4 small subunits are PetG, PetL, PetM and PetN. The complex functions as a dimer.

It localises to the cellular thylakoid membrane. Component of the cytochrome b6-f complex, which mediates electron transfer between photosystem II (PSII) and photosystem I (PSI), cyclic electron flow around PSI, and state transitions. The chain is Cytochrome b6-f complex subunit 7 from Synechococcus sp. (strain CC9902).